We begin with the raw amino-acid sequence, 266 residues long: Small ribosomal subunit protein uS3 (266 aa).

One can recognise a KH type-2 domain in the interval 39-107 (VREYLKKKLK…PVHVNIEEIR (69 aa)). A disordered region spans residues 214-266 (PVVEEVTEDKRPRRNARPGDRRPRRDGEGGAPGARRGGPRRGAGKPEDGKTGE). Basic and acidic residues-rich tracts occupy residues 230–241 (RPGDRRPRRDGE) and 257–266 (GKPEDGKTGE).

It belongs to the universal ribosomal protein uS3 family. As to quaternary structure, part of the 30S ribosomal subunit. Forms a tight complex with proteins S10 and S14.

Functionally, binds the lower part of the 30S subunit head. Binds mRNA in the 70S ribosome, positioning it for translation. This is Small ribosomal subunit protein uS3 from Burkholderia thailandensis (strain ATCC 700388 / DSM 13276 / CCUG 48851 / CIP 106301 / E264).